We begin with the raw amino-acid sequence, 838 residues long: V-type proton ATPase 116 kDa subunit a 1 (838 aa).

The Cytoplasmic portion of the chain corresponds to 1-388 (MGELFRSEEM…DAYGIGTYRE (388 aa)). A helical membrane pass occupies residues 389-407 (INPAPYTIITFPFLFAVMF). Residues 408–409 (GD) lie on the Vacuolar side of the membrane. A helical membrane pass occupies residues 410–426 (FGHGILMTLIAIWMVLR). Residues 427–441 (ESRILSQKSDNEMFS) lie on the Cytoplasmic side of the membrane. A helical transmembrane segment spans residues 442–471 (TVFSGRYIILLMGLFSTYTGLIYNDCFSKS). Residues 472–535 (LNMFGSSWSV…ANNKLAFLNS (64 aa)) lie on the Vacuolar side of the membrane. The chain crosses the membrane as a helical span at residues 536 to 555 (FKMKMSVILGIIHMLFGVML). Residues 556 to 573 (SLLNHIYFKKPLNIYLGF) lie on the Cytoplasmic side of the membrane. The chain crosses the membrane as a helical span at residues 574–594 (IPEMIFMSSLFGYLVILIFYK). At 595–639 (WTAYDAHTSKEAPSPLIHFINMFLFSYGDTSNKMLYRGQKGIQCF) the chain is on the vacuolar side. The helical transmembrane segment at 640 to 659 (LVVVALLCVPWMLVAKPLVL) threads the bilayer. Residues 660-725 (RHQYLRRKHL…DTVVYQAIHT (66 aa)) are Cytoplasmic-facing. The helical transmembrane segment at 726–750 (IEYCLGCISNTASYLRLWALSLAHA) threads the bilayer. Residues 751–771 (QLSEVLWTMVIHTGLSVRSLA) lie on the Vacuolar side of the membrane. Residues 772 to 810 (GGFGLVFIFAAFATLTVAILLVMEGLSAFLHALRLHWIE) form a helical membrane-spanning segment. The Cytoplasmic segment spans residues 811–838 (FQNKFYTGTGFKFLPFSFDPIREGKFDD).

Belongs to the V-ATPase 116 kDa subunit family. V-ATPase is a heteromultimeric enzyme made up of two complexes: the ATP-hydrolytic V1 complex and the proton translocation V0 complex. The V1 complex consists of three catalytic AB heterodimers that form a heterohexamer, three peripheral stalks each consisting of EG heterodimers, one central rotor including subunits D and F, and the regulatory subunits C and H. The proton translocation complex V0 consists of the proton transport subunit a, a ring of proteolipid subunits c9c'', rotary subunit d, subunits e and f, and two accessory subunits. In terms of tissue distribution, detected in brain (at protein level). Highest expression in brain, intermediate levels in kidney, and relatively low levels in bone and liver.

The protein resides in the cytoplasmic vesicle. It is found in the clathrin-coated vesicle membrane. The protein localises to the secretory vesicle. It localises to the synaptic vesicle membrane. Its subcellular location is the melanosome. Functionally, subunit of the V0 complex of vacuolar(H+)-ATPase (V-ATPase), a multisubunit enzyme composed of a peripheral complex (V1) that hydrolyzes ATP and a membrane integral complex (V0) that translocates protons. V-ATPase is responsible for acidifying and maintaining the pH of intracellular compartments and in some cell types, is targeted to the plasma membrane, where it is responsible for acidifying the extracellular environment. Required for assembly and activity of the vacuolar ATPase. This chain is V-type proton ATPase 116 kDa subunit a 1 (ATP6V0A1), found in Gallus gallus (Chicken).